We begin with the raw amino-acid sequence, 650 residues long: DNA topoisomerase 3 (650 aa).

The Toprim domain occupies 1–134; that stretch reads MRLFIAEKPS…KLNQIQRCLI (134 aa). Positions 7, 103, and 105 each coordinate Mg(2+). The Topo IA-type catalytic domain maps to 155-617; sequence FIPLATSALA…TLTNFLPELM (463 aa). The interval 194 to 199 is interaction with DNA; sequence SVGRVQ. The active-site O-(5'-phospho-DNA)-tyrosine intermediate is the Tyr-342.

The protein belongs to the type IA topoisomerase family. Requires Mg(2+) as cofactor.

The catalysed reaction is ATP-independent breakage of single-stranded DNA, followed by passage and rejoining.. Its function is as follows. Releases the supercoiling and torsional tension of DNA, which is introduced during the DNA replication and transcription, by transiently cleaving and rejoining one strand of the DNA duplex. Introduces a single-strand break via transesterification at a target site in duplex DNA. The scissile phosphodiester is attacked by the catalytic tyrosine of the enzyme, resulting in the formation of a DNA-(5'-phosphotyrosyl)-enzyme intermediate and the expulsion of a 3'-OH DNA strand. The free DNA strand then undergoes passage around the unbroken strand, thus removing DNA supercoils. Finally, in the religation step, the DNA 3'-OH attacks the covalent intermediate to expel the active-site tyrosine and restore the DNA phosphodiester backbone. The sequence is that of DNA topoisomerase 3 from Pasteurella multocida (strain Pm70).